Here is a 971-residue protein sequence, read N- to C-terminus: Isoleucine--tRNA ligase (971 aa).

A 'HIGH' region motif is present at residues 64-74 (PYANGHIHIGH). Position 602 (Glu-602) interacts with L-isoleucyl-5'-AMP. The short motif at 643–647 (KMSKS) is the 'KMSKS' region element. Lys-646 contributes to the ATP binding site.

It belongs to the class-I aminoacyl-tRNA synthetase family. IleS type 1 subfamily. As to quaternary structure, monomer.

Its subcellular location is the cytoplasm. It carries out the reaction tRNA(Ile) + L-isoleucine + ATP = L-isoleucyl-tRNA(Ile) + AMP + diphosphate. Catalyzes the attachment of isoleucine to tRNA(Ile). As IleRS can inadvertently accommodate and process structurally similar amino acids such as valine, to avoid such errors it has two additional distinct tRNA(Ile)-dependent editing activities. One activity is designated as 'pretransfer' editing and involves the hydrolysis of activated Val-AMP. The other activity is designated 'posttransfer' editing and involves deacylation of mischarged Val-tRNA(Ile). This chain is Isoleucine--tRNA ligase, found in Bartonella quintana (strain Toulouse) (Rochalimaea quintana).